A 302-amino-acid polypeptide reads, in one-letter code: Phosphatidylglycerol--prolipoprotein diacylglyceryl transferase (302 aa).

3 consecutive transmembrane segments (helical) span residues 26–46, 67–87, and 108–128; these read WYALAYVVGILLGWRYAVMLV, LVLWITLGIILGGRIGYVLFY, and IWEGGMSFHGGFLGVCAAIVL. An a 1,2-diacyl-sn-glycero-3-phospho-(1'-sn-glycerol)-binding site is contributed by Arg-156. Transmembrane regions (helical) follow at residues 231–251 and 263–283; these read GALVATFLICYGLFRVSLEGV and LGLTMGMILSIPMLAVGVWLL.

The protein belongs to the Lgt family.

It is found in the cell inner membrane. It carries out the reaction L-cysteinyl-[prolipoprotein] + a 1,2-diacyl-sn-glycero-3-phospho-(1'-sn-glycerol) = an S-1,2-diacyl-sn-glyceryl-L-cysteinyl-[prolipoprotein] + sn-glycerol 1-phosphate + H(+). Its pathway is protein modification; lipoprotein biosynthesis (diacylglyceryl transfer). Functionally, catalyzes the transfer of the diacylglyceryl group from phosphatidylglycerol to the sulfhydryl group of the N-terminal cysteine of a prolipoprotein, the first step in the formation of mature lipoproteins. The sequence is that of Phosphatidylglycerol--prolipoprotein diacylglyceryl transferase from Caulobacter sp. (strain K31).